The chain runs to 239 residues: Leucine-rich repeat-containing protein 57 (239 aa).

Gly2 carries N-myristoyl glycine lipidation. LRR repeat units follow at residues 39-60 (NLRT…IIGK), 63-85 (LLKS…CNLK), 86-107 (KLET…FGQL), 109-130 (ALKT…LCCL), 132-153 (HLDV…VGEL), 154-175 (QAIE…ISCC), 177-197 (RLKV…PQSI), and 202-222 (QICL…RELE).

The protein resides in the membrane. This is Leucine-rich repeat-containing protein 57 (Lrrc57) from Mus musculus (Mouse).